The chain runs to 603 residues: uncharacterized protein (603 aa).

Over residues 496 to 513 (EEEDQEEDDTSDDDDQEK) the composition is skewed to acidic residues. Disordered stretches follow at residues 496-536 (EEED…GSLE) and 549-568 (AVAEQDRKKTQKKHKIDTAQ). Residues 517–533 (NPQNNIGSLTRTPSSPG) are compositionally biased toward polar residues.

It belongs to the herpesviridae US22 family.

This is an uncharacterized protein from Human cytomegalovirus (strain AD169) (HHV-5).